A 321-amino-acid chain; its full sequence is Probable pectate lyase A (321 aa).

The first 18 residues, 1-18, serve as a signal peptide directing secretion; that stretch reads MKFVATLIACGLSGLALA. Residue Asn93 is glycosylated (N-linked (GlcNAc...) asparagine). Ca(2+) is bound by residues Asp134, Asp163, and Asp167. Residue Arg220 is part of the active site. An N-linked (GlcNAc...) asparagine glycan is attached at Asn238.

Belongs to the polysaccharide lyase 1 family. It depends on Ca(2+) as a cofactor.

Its subcellular location is the secreted. The enzyme catalyses Eliminative cleavage of (1-&gt;4)-alpha-D-galacturonan to give oligosaccharides with 4-deoxy-alpha-D-galact-4-enuronosyl groups at their non-reducing ends.. In terms of biological role, pectinolytic enzyme consist of four classes of enzymes: pectin lyase, polygalacturonase, pectin methylesterase and rhamnogalacturonase. Among pectinolytic enzymes, pectin lyase is the most important in depolymerization of pectin, since it cleaves internal glycosidic bonds of highly methylated pectins. Favors pectate, the anion, over pectin, the methyl ester. This chain is Probable pectate lyase A (plyA), found in Aspergillus fumigatus (strain ATCC MYA-4609 / CBS 101355 / FGSC A1100 / Af293) (Neosartorya fumigata).